The chain runs to 251 residues: ATP synthase subunit a (251 aa).

The next 5 helical transmembrane spans lie at 34–54 (VFLT…AASS), 93–113 (FVGT…LVPF), 130–150 (INTT…AGFS), 195–215 (LVVG…VMAL), and 216–236 (GLFT…AYIG).

This sequence belongs to the ATPase A chain family. F-type ATPases have 2 components, CF(1) - the catalytic core - and CF(0) - the membrane proton channel. CF(1) has five subunits: alpha(3), beta(3), gamma(1), delta(1), epsilon(1). CF(0) has four main subunits: a, b, b' and c.

It localises to the cellular thylakoid membrane. Its function is as follows. Key component of the proton channel; it plays a direct role in the translocation of protons across the membrane. The chain is ATP synthase subunit a from Nostoc sp. (strain PCC 7120 / SAG 25.82 / UTEX 2576).